The sequence spans 284 residues: 4-hydroxybenzoate octaprenyltransferase (284 aa).

A run of 8 helical transmembrane segments spans residues P16 to G36, W40 to I60, L91 to L111, F132 to F152, N157 to Y177, V206 to Q226, T231 to I251, and C259 to L279.

The protein belongs to the UbiA prenyltransferase family. It depends on Mg(2+) as a cofactor.

The protein resides in the cell inner membrane. It carries out the reaction all-trans-octaprenyl diphosphate + 4-hydroxybenzoate = 4-hydroxy-3-(all-trans-octaprenyl)benzoate + diphosphate. Its pathway is cofactor biosynthesis; ubiquinone biosynthesis. Functionally, catalyzes the prenylation of para-hydroxybenzoate (PHB) with an all-trans polyprenyl group. Mediates the second step in the final reaction sequence of ubiquinone-8 (UQ-8) biosynthesis, which is the condensation of the polyisoprenoid side chain with PHB, generating the first membrane-bound Q intermediate 3-octaprenyl-4-hydroxybenzoate. The sequence is that of 4-hydroxybenzoate octaprenyltransferase from Herminiimonas arsenicoxydans.